A 491-amino-acid chain; its full sequence is Delayed-rectifier potassium channel regulatory subunit KCNS3 (491 aa).

Residues 1-182 are Cytoplasmic-facing; it reads MVFGEFFHRP…IRMENPAYCL (182 aa). Residues 183 to 204 form a helical membrane-spanning segment; it reads SAKLIAISSLSVVLASIVAMCV. The Extracellular segment spans residues 205–220; that stretch reads HSMSEFQNEDGEVDDP. The chain crosses the membrane as a helical span at residues 221–243; the sequence is VLEGVEIACIAWFTGELAIRLVA. The Cytoplasmic portion of the chain corresponds to 244-254; that stretch reads APSQKKFWKNP. The helical transmembrane segment at 255-275 threads the bilayer; that stretch reads LNIIDFVSIIPFYATLAVDTK. Residues 276–285 lie on the Extracellular side of the membrane; sequence EEESEDIENM. Residues 286–306 form a helical; Voltage-sensor membrane-spanning segment; the sequence is GKVVQILRLMRIFRILKLARH. Residues 307-321 are Cytoplasmic-facing; that stretch reads SVGLRSLGATLRHSY. The chain crosses the membrane as a helical span at residues 322-343; the sequence is HEVGLLLLFLSVGISIFSVLIY. The Extracellular segment spans residues 344 to 357; it reads SVEKDELASSLTSI. Residues 358-369 constitute an intramembrane region (helical); the sequence is PICWWWATISMT. A Selectivity filter motif is present at residues 370–375; that stretch reads TVGYGD. Residues 370 to 377 lie within the membrane without spanning it; it reads TVGYGDTH. The Extracellular segment spans residues 378–384; that stretch reads PVTLAGK. The helical transmembrane segment at 385–413 threads the bilayer; sequence IIASTCIICGILVVALPITIIFNKFSKYY. Residues 414–491 lie on the Cytoplasmic side of the membrane; it reads QKQKDMDVDQ…TASLENCTAK (78 aa).

Belongs to the potassium channel family. S (TC 1.A.1.2) subfamily. Kv9.3/KCNS3 sub-subfamily. As to quaternary structure, heterotetramer with KCNB1. Does not form homomultimers. As to expression, expressed in myocytes. Detected in lung, spleen, brain and heart.

The protein localises to the cell membrane. Its function is as follows. Potassium channel regulatory subunit that modulates the delayed rectifier potassium channel activity of KCNB1 by namely slowing down the deactivation and inactivation time constants. While it does not form functional channel on its own, it can form functional heterotetrameric channels with KCNB1. The chain is Delayed-rectifier potassium channel regulatory subunit KCNS3 from Rattus norvegicus (Rat).